The chain runs to 438 residues: MRRRTATRRPAKKAPLGPMQTYLVEGLTHEAKGVARLNGKVTFIEGALPGETVTAQVNKPGRRFDEAVLNAVIETSVDRVSPACQHFGDCGGCSFQHLEESAQRLAKADWLAGQLRNLLSKEQIECLFDVGSGYRRRARIAIDHKKNALVLGFRSKASNRVVDVEQCHVLTPSLQTLFVSLKVCLKQHPILSSLGHIELLEDTKGLSVVLRLVSNITPVQQQAYLDWAQQQDVELYWQAPKASRADLTDEQMRYYDVSNLRLKYHPQDFIQINEFMNQKMVAQAMAWLAPQKDDTVLDLFCGVGNFSLPLAQLAGSVIGVELQESMVQAGRHNASLNGLKNLSFVAADLTQPVAGQFSAENINKILLDPPRAGAFEFLDTIIHIAPQQILYVSCNASTLARDAEYLVLNGYKVVRAGLMDMFPQTSHVETMMLLQKQK.

One can recognise a TRAM domain in the interval 13–71 (KAPLGPMQTYLVEGLTHEAKGVARLNGKVTFIEGALPGETVTAQVNKPGRRFDEAVLNA). [4Fe-4S] cluster contacts are provided by cysteine 84, cysteine 90, cysteine 93, and cysteine 167. S-adenosyl-L-methionine-binding residues include glutamine 271, phenylalanine 300, asparagine 305, glutamate 321, aspartate 348, and aspartate 368. The active-site Nucleophile is cysteine 394.

This sequence belongs to the class I-like SAM-binding methyltransferase superfamily. RNA M5U methyltransferase family. RlmD subfamily.

It catalyses the reaction uridine(1939) in 23S rRNA + S-adenosyl-L-methionine = 5-methyluridine(1939) in 23S rRNA + S-adenosyl-L-homocysteine + H(+). In terms of biological role, catalyzes the formation of 5-methyl-uridine at position 1939 (m5U1939) in 23S rRNA. The sequence is that of 23S rRNA (uracil(1939)-C(5))-methyltransferase RlmD from Marinomonas posidonica (strain CECT 7376 / NCIMB 14433 / IVIA-Po-181).